A 129-amino-acid chain; its full sequence is Sulfurtransferase TusD (129 aa).

The active-site Cysteine persulfide intermediate is Cys-79.

It belongs to the DsrE/TusD family. In terms of assembly, heterohexamer, formed by a dimer of trimers. The hexameric TusBCD complex contains 2 copies each of TusB, TusC and TusD. The TusBCD complex interacts with TusE.

It localises to the cytoplasm. In terms of biological role, part of a sulfur-relay system required for 2-thiolation of 5-methylaminomethyl-2-thiouridine (mnm(5)s(2)U) at tRNA wobble positions. Accepts sulfur from TusA and transfers it in turn to TusE. This Pectobacterium carotovorum subsp. carotovorum (strain PC1) protein is Sulfurtransferase TusD.